Here is a 161-residue protein sequence, read N- to C-terminus: Nucleotide-binding protein amb3630 (161 aa).

It belongs to the YajQ family.

Functionally, nucleotide-binding protein. The chain is Nucleotide-binding protein amb3630 from Paramagnetospirillum magneticum (strain ATCC 700264 / AMB-1) (Magnetospirillum magneticum).